The primary structure comprises 302 residues: Bifunctional protein FolD (302 aa).

NADP(+) contacts are provided by residues 165-167, S190, and I231; that span reads GRS.

This sequence belongs to the tetrahydrofolate dehydrogenase/cyclohydrolase family. In terms of assembly, homodimer.

The enzyme catalyses (6R)-5,10-methylene-5,6,7,8-tetrahydrofolate + NADP(+) = (6R)-5,10-methenyltetrahydrofolate + NADPH. It catalyses the reaction (6R)-5,10-methenyltetrahydrofolate + H2O = (6R)-10-formyltetrahydrofolate + H(+). It functions in the pathway one-carbon metabolism; tetrahydrofolate interconversion. Catalyzes the oxidation of 5,10-methylenetetrahydrofolate to 5,10-methenyltetrahydrofolate and then the hydrolysis of 5,10-methenyltetrahydrofolate to 10-formyltetrahydrofolate. This is Bifunctional protein FolD from Prochlorococcus marinus (strain MIT 9303).